The sequence spans 1794 residues: Protein TIC 214 (1794 aa).

Helical transmembrane passes span 23–43 (VVVG…SYLF), 64–84 (FIMG…HLAL), 87–107 (PHTI…WNNH), 124–144 (LSIQ…HFIL), 172–192 (VGWL…LFWI), and 218–238 (ILSI…PSPI). The segment at 244 to 307 (KETSETGETE…REGVNGKEKT (64 aa)) is disordered. Residues 248–258 (ETGETEEETDV) are compositionally biased toward acidic residues. Composition is skewed to basic and acidic residues over residues 259–276 (EIER…KEGS) and 286–307 (SEEK…KEKT).

Belongs to the TIC214 family. In terms of assembly, part of the Tic complex.

Its subcellular location is the plastid. The protein resides in the chloroplast inner membrane. Involved in protein precursor import into chloroplasts. May be part of an intermediate translocation complex acting as a protein-conducting channel at the inner envelope. This chain is Protein TIC 214, found in Amborella trichopoda.